The sequence spans 107 residues: 4-carboxymethyl-4-methylbutenolide mutase (107 aa).

Catalysis depends on His-26, which acts as the Proton donor/acceptor. 3-methylmuconolactone is bound by residues His-26 and Tyr-39. 2 residues coordinate 4-methylmuconolactone: His-26 and Tyr-39.

Belongs to the MmlI family. In terms of assembly, homodimer.

It catalyses the reaction 4-methylmuconolactone = 3-methylmuconolactone. Inhibited by p-chloromercuribenzoate. In terms of biological role, isomerase involved in the degradation of 4-methylsalicylate and 5-methylsalicylate. Catalyzes the isomerization of the dead-end metabolite 4-methylmuconolactone (4-ML) to 3-methylmuconolactone (3-ML), which can then be further degraded through a modified 3-oxoadipate pathway. Can also use 1-methylbislactone but not 3-methyl-cis,cis-muconate. This is 4-carboxymethyl-4-methylbutenolide mutase from Pseudomonas reinekei.